Consider the following 396-residue polypeptide: 1-deoxy-D-xylulose 5-phosphate reductoisomerase (396 aa).

5 residues coordinate NADPH: Thr-13, Gly-14, Ser-15, Ile-16, and Asn-127. A 1-deoxy-D-xylulose 5-phosphate-binding site is contributed by Lys-128. Residue Glu-129 coordinates NADPH. Mn(2+) is bound at residue Asp-153. Residues Ser-154, Glu-155, Ser-184, and His-207 each coordinate 1-deoxy-D-xylulose 5-phosphate. Glu-155 lines the Mn(2+) pocket. Residue Gly-213 coordinates NADPH. 4 residues coordinate 1-deoxy-D-xylulose 5-phosphate: Ser-220, Asn-225, Lys-226, and Glu-229. Position 229 (Glu-229) interacts with Mn(2+).

The protein belongs to the DXR family. Requires Mg(2+) as cofactor. Mn(2+) is required as a cofactor.

It catalyses the reaction 2-C-methyl-D-erythritol 4-phosphate + NADP(+) = 1-deoxy-D-xylulose 5-phosphate + NADPH + H(+). Its pathway is isoprenoid biosynthesis; isopentenyl diphosphate biosynthesis via DXP pathway; isopentenyl diphosphate from 1-deoxy-D-xylulose 5-phosphate: step 1/6. Catalyzes the NADPH-dependent rearrangement and reduction of 1-deoxy-D-xylulose-5-phosphate (DXP) to 2-C-methyl-D-erythritol 4-phosphate (MEP). The polypeptide is 1-deoxy-D-xylulose 5-phosphate reductoisomerase (Pseudomonas aeruginosa (strain UCBPP-PA14)).